The sequence spans 274 residues: MGARRATYWAVLDTLVVGYALLPVLWIFSLSLKPTSTVKDGKLIPSTVTFDNYRGIFRGDLFSSALINSIGIGLITTVIAVVLGAMAAYAVARLEFPGKRLLIGAALLITMFPSISLVTPLFNIERAIGLFDTWPGLILPYITFALPLAIYTLSAFFREIPWDLEKAAKMDGATPGQAFRKVIVPLAAPGLVTAAILVFIFAWNDLLLALSLTATKAAITAPVAIANFTGSSQFEEPTGSIAAGAIVITIPIIVFVLIFQRRIVAGLTSGAVKG.

A run of 6 helical transmembrane segments spans residues 8–28 (YWAV…LWIF), 70–90 (IGIG…AAYA), 102–122 (LIGA…TPLF), 137–157 (LILP…SAFF), 182–202 (VIVP…FIFA), and 239–259 (GSIA…VLIF). Positions 66 to 259 (LINSIGIGLI…IPIIVFVLIF (194 aa)) constitute an ABC transmembrane type-1 domain.

The protein belongs to the binding-protein-dependent transport system permease family. The complex is composed of two ATP-binding proteins (SugC), two transmembrane proteins (Suga and SugB) and a solute-binding protein (LpqY).

The protein resides in the cell inner membrane. Functionally, part of the ABC transporter complex LpqY-SugA-SugB-SugC, which is highly specific for uptake of trehalose. Involved in the recycling of extracellular trehalose released from trehalose-containing molecules synthesized by M.tuberculosis. Trehalose uptake is essential for virulence. Probably responsible for the translocation of the substrate across the membrane. The polypeptide is Trehalose transport system permease protein SugB (sugB) (Mycobacterium tuberculosis (strain CDC 1551 / Oshkosh)).